The sequence spans 158 residues: Protein Smg homolog (158 aa).

The protein belongs to the Smg family.

In Pseudoalteromonas atlantica (strain T6c / ATCC BAA-1087), this protein is Protein Smg homolog.